A 232-amino-acid polypeptide reads, in one-letter code: Probable intron-encoded endonuclease aI3 (232 aa).

This sequence belongs to the LAGLIDADG endonuclease family.

The protein localises to the mitochondrion. Mitochondrial DNA endonuclease involved in intron homing. This Dictyostelium discoideum (Social amoeba) protein is Probable intron-encoded endonuclease aI3 (aI3).